We begin with the raw amino-acid sequence, 73 residues long: Myosin-IB light chain (73 aa).

EF-hand domains follow at residues 3 to 38 (DEKTQLIEAFYNFDGDYDGFVSVEEFRGIIRDGLPM) and 38 to 73 (MTEAEITEFFEAADPNNTGFIDYKAFAAMLYSVDES). Ca(2+)-binding residues include aspartate 16, aspartate 18, aspartate 20, and glutamate 27.

Myosin I is a dimer of a heavy and a light chain. Inability to self-assemble into filaments. Interacts with myoB. Does not interact with myoC or myoD.

Its function is as follows. Functions as the light chain for myosin-B. Binds calcium with submicromolar affinity and may sense physiological calcium changes. The chain is Myosin-IB light chain (mlcB) from Dictyostelium discoideum (Social amoeba).